Reading from the N-terminus, the 301-residue chain is MSLSRLSSPQTFSRVFIVARGAATGHAVAPSSDNSIGYFEKIAYRFKGIPLPTETEAPKSMFDACNKEWSAPELLPSVPKDFKEHPDRDLTNYPYPSRPMYPPKTRLLMMPDSWFTAFQKVTGTSGPYLFFGGLFAFLVNKELWVFEEQGHMTVGWILFYLLVSRTAGYKIDAGLYKDYQERVGFFKGLIQEDLKEAVDFRKTSAAQTASFAALKEGMPTSLKDSMQLQLEAAYRKNVQTISNEIKRRIEYLKETEETKARFERDQLLKLINDSVEKQVSQKDFQEKFLQNAIQQLKGIAV.

Residues 1–21 constitute a mitochondrion transit peptide; it reads MSLSRLSSPQTFSRVFIVARG.

This sequence belongs to the eukaryotic ATPase B chain family. As to quaternary structure, subunit of the F-type ATPase which has 2 components, CF(1) - the catalytic core - and CF(0) - the membrane proton channel.

Its subcellular location is the mitochondrion. The protein localises to the mitochondrion inner membrane. Functionally, mitochondrial membrane ATP synthase (F(1)F(0) ATP synthase or Complex V) produces ATP from ADP in the presence of a proton gradient across the membrane which is generated by electron transport complexes of the respiratory chain. F-type ATPases consist of two structural domains, F(1) - containing the extramembraneous catalytic core, and F(0) - containing the membrane proton channel, linked together by a central stalk and a peripheral stalk. During catalysis, ATP synthesis in the catalytic domain of F(1) is coupled via a rotary mechanism of the central stalk subunits to proton translocation. Part of the complex F(0) domain and the peripheric stalk, which acts as a stator to hold the subunits of the catalytic subcomplexes relative to the rotary elements. Plays a role in germline development. This is ATP synthase F(0) complex subunit B1, mitochondrial from Caenorhabditis elegans.